A 380-amino-acid chain; its full sequence is Queuine tRNA-ribosyltransferase (380 aa).

Aspartate 96 serves as the catalytic Proton acceptor. Substrate-binding positions include 96-100 (DSGGF), aspartate 150, glutamine 193, and glycine 220. Residues 251 to 257 (GVGAPDS) form an RNA binding region. The active-site Nucleophile is the aspartate 270. An RNA binding; important for wobble base 34 recognition region spans residues 275–279 (TRIAR). Positions 308, 310, 313, and 339 each coordinate Zn(2+).

It belongs to the queuine tRNA-ribosyltransferase family. As to quaternary structure, homodimer. Within each dimer, one monomer is responsible for RNA recognition and catalysis, while the other monomer binds to the replacement base PreQ1. Zn(2+) serves as cofactor.

The catalysed reaction is 7-aminomethyl-7-carbaguanine + guanosine(34) in tRNA = 7-aminomethyl-7-carbaguanosine(34) in tRNA + guanine. Its pathway is tRNA modification; tRNA-queuosine biosynthesis. Its function is as follows. Catalyzes the base-exchange of a guanine (G) residue with the queuine precursor 7-aminomethyl-7-deazaguanine (PreQ1) at position 34 (anticodon wobble position) in tRNAs with GU(N) anticodons (tRNA-Asp, -Asn, -His and -Tyr). Catalysis occurs through a double-displacement mechanism. The nucleophile active site attacks the C1' of nucleotide 34 to detach the guanine base from the RNA, forming a covalent enzyme-RNA intermediate. The proton acceptor active site deprotonates the incoming PreQ1, allowing a nucleophilic attack on the C1' of the ribose to form the product. After dissociation, two additional enzymatic reactions on the tRNA convert PreQ1 to queuine (Q), resulting in the hypermodified nucleoside queuosine (7-(((4,5-cis-dihydroxy-2-cyclopenten-1-yl)amino)methyl)-7-deazaguanosine). This chain is Queuine tRNA-ribosyltransferase, found in Streptococcus pyogenes serotype M3 (strain ATCC BAA-595 / MGAS315).